The chain runs to 427 residues: Putative acyl-CoA thioester hydrolase YbhC (427 aa).

Residues 1–21 (MNTFSVSRLALALAFGVTLTA) form the signal peptide. The N-palmitoyl cysteine moiety is linked to residue Cys-22. Cys-22 is lipidated: S-diacylglycerol cysteine. The segment at 23 to 42 (SSTPPDQRPSDQTAPGTSSR) is disordered. An intrachain disulfide couples Cys-185 to Cys-197. The Nucleophile role is filled by Asp-285. Residue Arg-345 participates in substrate binding.

It belongs to the pectinesterase family.

The protein localises to the cell outer membrane. In terms of biological role, putative thioesterase. Does not bind pectin, and has no pectinesterase activity. In Escherichia coli (strain K12), this protein is Putative acyl-CoA thioester hydrolase YbhC (ybhC).